Consider the following 445-residue polypeptide: Ribulose bisphosphate carboxylase large chain (445 aa).

Residues Asn-89 and Thr-139 each contribute to the substrate site. Residue Lys-141 is the Proton acceptor of the active site. Lys-143 provides a ligand contact to substrate. Positions 167, 169, and 170 each coordinate Mg(2+). At Lys-167 the chain carries N6-carboxylysine. The active-site Proton acceptor is the His-260. The substrate site is built by Arg-261, His-293, and Ser-345.

Belongs to the RuBisCO large chain family. Type I subfamily. As to quaternary structure, heterohexadecamer of 8 large chains and 8 small chains; disulfide-linked. The disulfide link is formed within the large subunit homodimers. The cofactor is Mg(2+). The disulfide bond which can form in the large chain dimeric partners within the hexadecamer appears to be associated with oxidative stress and protein turnover.

It is found in the plastid. The protein resides in the chloroplast. It catalyses the reaction 2 (2R)-3-phosphoglycerate + 2 H(+) = D-ribulose 1,5-bisphosphate + CO2 + H2O. The catalysed reaction is D-ribulose 1,5-bisphosphate + O2 = 2-phosphoglycolate + (2R)-3-phosphoglycerate + 2 H(+). Functionally, ruBisCO catalyzes two reactions: the carboxylation of D-ribulose 1,5-bisphosphate, the primary event in carbon dioxide fixation, as well as the oxidative fragmentation of the pentose substrate in the photorespiration process. Both reactions occur simultaneously and in competition at the same active site. This is Ribulose bisphosphate carboxylase large chain from Callicarpa dichotoma (Purple beautyberry).